Here is a 283-residue protein sequence, read N- to C-terminus: Elongation factor Ts (283 aa).

Residues 80–83 (TDFV) form an involved in Mg(2+) ion dislocation from EF-Tu region.

This sequence belongs to the EF-Ts family.

The protein localises to the cytoplasm. In terms of biological role, associates with the EF-Tu.GDP complex and induces the exchange of GDP to GTP. It remains bound to the aminoacyl-tRNA.EF-Tu.GTP complex up to the GTP hydrolysis stage on the ribosome. The polypeptide is Elongation factor Ts (Salmonella agona (strain SL483)).